A 331-amino-acid polypeptide reads, in one-letter code: Putative mitochondrial 2-oxoglutarate/malate carrier protein (331 aa).

Solcar repeat units follow at residues 39-128, 140-231, and 239-329; these read VRAA…FMSR, VGFK…AKAQ, and SSKV…LGWL. The next 6 helical transmembrane spans lie at 42-62, 103-121, 148-168, 199-219, 245-265, and 309-329; these read ALPF…IQPI, GLSA…RIGC, AGLA…LALI, GVAA…ALNF, LSAS…FDFV, and YVRI…LGWL.

The protein belongs to the mitochondrial carrier (TC 2.A.29) family.

It is found in the mitochondrion inner membrane. Functionally, catalyzes the transport of 2-oxoglutarate across the inner mitochondrial membrane. The sequence is that of Putative mitochondrial 2-oxoglutarate/malate carrier protein (mic-33) from Neurospora crassa (strain ATCC 24698 / 74-OR23-1A / CBS 708.71 / DSM 1257 / FGSC 987).